The chain runs to 1435 residues: Cardiac-enriched FHL2-interacting protein (1435 aa).

4 disordered regions span residues 109-176 (EEKY…PPKF), 203-234 (SNTH…GSSS), 250-270 (FPSP…GTFL), and 291-311 (KDTA…DTTL). At Thr120 the chain carries Phosphothreonine. Positions 133-147 (LRSSNKPVSKVSTLI) are enriched in polar residues. A compositionally biased stretch (basic and acidic residues) spans 149-160 (SFDRTESQRCES). Ser323 is subject to Phosphoserine. 6 disordered regions span residues 362–592 (EGKA…LTLS), 609–772 (AERS…EKEN), 795–847 (SQGE…SPSS), 1007–1108 (PEGD…ARVT), 1138–1261 (SPRG…PGGP), and 1363–1435 (QGPR…EGIS). Residues 389–402 (KGKESLQDTLEEKT) show a composition bias toward basic and acidic residues. Ser470 carries the phosphoserine modification. 4 stretches are compositionally biased toward basic and acidic residues: residues 479–493 (QEKE…DSYK), 522–535 (VLDE…DGKQ), 609–620 (AERSSYENKEVE), and 650–667 (CNRD…KTHQ). Over residues 668 to 679 (LENGLSRSVSQE) the composition is skewed to polar residues. The span at 727 to 741 (KFSTSSSDQSFASFD) shows a compositional bias: low complexity. Residues 751–772 (NQREDRRKDVSAGDSQKDEKEN) are compositionally biased toward basic and acidic residues. Phosphoserine is present on Ser816. Residues 831–847 (KGTTFSQAKDLTPSPSS) are compositionally biased toward polar residues. Over residues 1055 to 1066 (NSPNPGSPGESS) the composition is skewed to low complexity. Positions 1067–1082 (ACSPAASNIWEESSQA) are enriched in polar residues. The segment covering 1083 to 1093 (PGGPELLPEEP) has biased composition (low complexity). Residues 1094 to 1105 (NQASPWASSSPA) are compositionally biased toward polar residues. Residues 1182–1193 (RRAKKLASKRRK) are compositionally biased toward basic residues. The segment covering 1194–1211 (TDQAQEKHGESQEGKPCP) has biased composition (basic and acidic residues). A compositionally biased stretch (acidic residues) spans 1424–1435 (DDLEDFATEGIS).

As to quaternary structure, interacts with FHL2. In terms of tissue distribution, expressed in the heart and skeletal muscle.

The protein resides in the cytoplasm. It is found in the myofibril. It localises to the sarcomere. The protein localises to the z line. Its function is as follows. Plays an important role in cardiomyocyte hypertrophy via activation of the calcineurin/NFAT signaling pathway. In Homo sapiens (Human), this protein is Cardiac-enriched FHL2-interacting protein.